A 214-amino-acid polypeptide reads, in one-letter code: Response regulator GacA (214 aa).

Residues 3-119 enclose the Response regulatory domain; that stretch reads KVLVVDDHDL…EMVQAIRLVF (117 aa). The residue at position 54 (Asp54) is a 4-aspartylphosphate. An HTH luxR-type domain is found at 143-208; it reads NNSPFDLLSE…ELALLAVRHG (66 aa). The segment at residues 167–186 is a DNA-binding region (H-T-H motif); that stretch reads VQTISDKLCLSPKTVNTYRY.

Post-translationally, phosphorylated by LemA.

Functionally, forms part of a two-component regulatory system GacA/GacA(LemA). May be involved in lesion formation, swarming and in the production of extracellular protease, syringomycin and N-acyl-L-homoserine lactone (acyl-HSL). The polypeptide is Response regulator GacA (gacA) (Pseudomonas syringae pv. syringae (strain B728a)).